Here is a 141-residue protein sequence, read N- to C-terminus: MRQRTIVCPLIQNEGHYLLCKMAADRGVFPGQWALSGGGVEPVERIEEALRREIREELGEKLILTHIAPWSFRDDTRVKTYPDGRQETIYMIYLIFDCVSANRDVTINEEFDDYAWVKAEDLKNYDLNAATRVTLSQKGLL.

The Nudix hydrolase domain maps to 1–141 (MRQRTIVCPL…RVTLSQKGLL (141 aa)). The Nudix box motif lies at 38 to 59 (GGVEPVERIEEALRREIREELG).

The protein belongs to the Nudix hydrolase family. NudI subfamily. In terms of assembly, monomer. Mg(2+) is required as a cofactor.

The enzyme catalyses a ribonucleoside 5'-triphosphate + H2O = a ribonucleoside 5'-phosphate + diphosphate + H(+). The catalysed reaction is a 2'-deoxyribonucleoside 5'-triphosphate + H2O = a 2'-deoxyribonucleoside 5'-phosphate + diphosphate + H(+). It carries out the reaction dUTP + H2O = dUMP + diphosphate + H(+). It catalyses the reaction dTTP + H2O = dTMP + diphosphate + H(+). The enzyme catalyses dCTP + H2O = dCMP + diphosphate + H(+). In terms of biological role, catalyzes the hydrolysis of nucleoside triphosphates, with a preference for pyrimidine deoxynucleoside triphosphates (dUTP, dTTP and dCTP). The protein is Nucleoside triphosphatase NudI of Klebsiella pneumoniae (strain 342).